A 1481-amino-acid polypeptide reads, in one-letter code: Cystic fibrosis transmembrane conductance regulator (1481 aa).

Topologically, residues 1–77 (MQRSPLEKAS…KLINALRRCF (77 aa)) are cytoplasmic. Residues 78-98 (FWRFTFYGILLYLGEVTKAVQ) form a helical membrane-spanning segment. Positions 81-365 (FTFYGILLYL…WAVQTWYDSL (285 aa)) constitute an ABC transmembrane type-1 1 domain. The Extracellular portion of the chain corresponds to 99-122 (PLLLGRIIASYDPDNKTERSIAIY). The helical transmembrane segment at 123 to 146 (LGIGLCLLFIVRTLLLHPAIFGLH) threads the bilayer. Residues 147-195 (HIGMQMRIAMFSLIYKKTLKLSSRVLDKISIGQLVSLLSNNLNKFDEGL) lie on the Cytoplasmic side of the membrane. Residues 196–216 (ALAHFVWIAPLQVALLMGLIW) form a helical membrane-spanning segment. The Extracellular portion of the chain corresponds to 217-222 (ELLQAS). The helical transmembrane segment at 223–243 (AFCGLGFLIVLALFQAGLGRM) threads the bilayer. At 244–298 (MMKYRDQRAGKINERLVITSEMIENIQSVKAYCWEEAMEKIIENLRQTELKLTRK) the chain is on the cytoplasmic side. Residues 299-319 (AAYVRYFNSSAFFFSGFFVVF) form a helical membrane-spanning segment. The Extracellular portion of the chain corresponds to 320 to 339 (LSVLPYALIKGIVLRKIFTT). A helical transmembrane segment spans residues 340-358 (ISFCIVLRMAVTRQFPWAV). Over 359-858 (QTWYDSLGAI…YLRYITLHKS (500 aa)) the chain is Cytoplasmic. ATP is bound by residues tryptophan 401, serine 434, 458-465 (GSTGAGKT), and glutamine 493. One can recognise an ABC transporter 1 domain in the interval 423–646 (NGDDNLFFSN…RPDFSSKLMG (224 aa)). Cysteine 524 is lipidated: S-palmitoyl cysteine. 2 positions are modified to phosphoserine: serine 549 and serine 660. The interval 654-831 (SSERRNSILT…EEINEEDLKE (178 aa)) is disordered R region. Residue serine 670 is modified to Phosphoserine; by PKA. Serine 686 carries the phosphoserine modification. Lysine 688 is covalently cross-linked (Glycyl lysine isopeptide (Lys-Gly) (interchain with G-Cter in ubiquitin)). Serine 700 and serine 712 each carry phosphoserine. Position 717 is a phosphothreonine (threonine 717). Phosphoserine is present on residues serine 737, serine 753, serine 768, serine 790, serine 795, and serine 813. The helical transmembrane segment at 859 to 879 (LIFVLIWCLVIFLAEVAASLV) threads the bilayer. Residues 859–1155 (LIFVLIWCLV…AVNSSIDVDS (297 aa)) form the ABC transmembrane type-1 2 domain. At 880-918 (VLWLLGNTPFQDKGNSTYSRNNSYAVIITNTSSYYVFYI) the chain is on the extracellular side. N-linked (GlcNAc...) asparagine glycosylation is found at asparagine 894, asparagine 900, and asparagine 909. A discontinuously helical transmembrane segment spans residues 919–939 (YVGVADTLLALGFFRGLPLVH). Residues 940–990 (TLITVSKMLHHKMLHSVLQAPMSTLNTLKAGGILNRFSKDIAILDDLLPLT) lie on the Cytoplasmic side of the membrane. The chain crosses the membrane as a helical span at residues 991-1011 (IFDFIQLLLIVIGAIAVVSVL). Residues 1012–1013 (QP) are Extracellular-facing. The helical transmembrane segment at 1014-1034 (YIFLATVPVIAAFILLRAYFL) threads the bilayer. The Cytoplasmic segment spans residues 1035-1095 (QTSQQLKQLE…TANWFLYLST (61 aa)). A helical transmembrane segment spans residues 1096–1116 (LRWFQMRIEMIFVIFFIAVTF). Residues 1117-1130 (ISILTTGEGEGTVG) lie on the Extracellular side of the membrane. A helical membrane pass occupies residues 1131–1151 (IILTLAMNIMSTLQWAVNSSI). Residues 1152–1481 (DVDSLMRSVS…TEEEVQETRL (330 aa)) are Cytoplasmic-facing. Residues 1211–1444 (MTIKDLTAKY…KSLFRQAISH (234 aa)) form the ABC transporter 2 domain. Residues tyrosine 1220 and 1245-1252 (GRTGSGKS) contribute to the ATP site. The interaction with GORASP2 stretch occupies residues 1387–1481 (RALKQAFADC…TEEEVQETRL (95 aa)). Cysteine 1396 carries S-palmitoyl cysteine lipidation. Serine 1445 and serine 1457 each carry phosphoserine. The disordered stretch occupies residues 1453–1481 (HRNSSKYKSQPQIASLKEETEEEVQETRL). A compositionally biased stretch (acidic residues) spans 1471–1481 (ETEEEVQETRL). The PDZ-binding motif lies at 1479 to 1481 (TRL).

The protein belongs to the ABC transporter superfamily. ABCC family. CFTR transporter (TC 3.A.1.202) subfamily. In terms of assembly, monomer; does not require oligomerization for channel activity. May form oligomers in the membrane. Interacts with SLC26A3, SLC26A6 and NHERF1. Interacts with SHANK2. Interacts with MYO6. Interacts (via C-terminus) with GOPC (via PDZ domain); this promotes CFTR internalization and thereby decreases channel activity. Interacts with SLC4A7 through NHERF1. Found in a complex with MYO5B and RAB11A. Interacts with ANO1. Interacts with SLC26A8. Interacts with AHCYL1; the interaction increases CFTR activity. Interacts with CSE1L. The core-glycosylated form interacts with GORASP2 (via PDZ GRASP-type 1 domain) in respone to ER stress. Interacts with MARCHF2; the interaction leads to CFTR ubiqtuitination and degradation. Interacts with ADGRG2. N-glycosylated. In terms of processing, phosphorylated; cAMP treatment promotes phosphorylation and activates the channel. Dephosphorylation decreases the ATPase activity (in vitro). Phosphorylation at PKA sites activates the channel. Phosphorylation at PKC sites enhances the response to phosphorylation by PKA. Phosphorylated by AMPK; this inhibits channel activity. Post-translationally, ubiquitinated, leading to its degradation in the lysosome. Deubiquitination by USP10 in early endosomes enhances its endocytic recycling to the cell membrane. Ubiquitinated by RNF185 during ER stress. Ubiquitinated by MARCHF2.

Its subcellular location is the apical cell membrane. The protein resides in the early endosome membrane. It is found in the cell membrane. It localises to the recycling endosome membrane. The protein localises to the endoplasmic reticulum membrane. Its subcellular location is the nucleus. It carries out the reaction ATP + H2O + closed Cl(-) channel = ADP + phosphate + open Cl(-) channel.. It catalyses the reaction chloride(in) = chloride(out). The enzyme catalyses hydrogencarbonate(in) = hydrogencarbonate(out). The catalysed reaction is ATP + H2O = ADP + phosphate + H(+). Its function is as follows. Epithelial ion channel that plays an important role in the regulation of epithelial ion and water transport and fluid homeostasis. Mediates the transport of chloride ions across the cell membrane. Possesses an intrinsic ATPase activity and utilizes ATP to gate its channel; the passive flow of anions through the channel is gated by cycles of ATP binding and hydrolysis by the ATP-binding domains. The ion channel is also permeable to HCO(3)(-); selectivity depends on the extracellular chloride concentration. Exerts its function also by modulating the activity of other ion channels and transporters. Contributes to the regulation of the pH and the ion content of the epithelial fluid layer. Modulates the activity of the epithelial sodium channel (ENaC) complex, in part by regulating the cell surface expression of the ENaC complex. May regulate bicarbonate secretion and salvage in epithelial cells by regulating the transporter SLC4A7. Can inhibit the chloride channel activity of ANO1. Plays a role in the chloride and bicarbonate homeostasis during sperm epididymal maturation and capacitation. This chain is Cystic fibrosis transmembrane conductance regulator, found in Aotus nancymaae (Ma's night monkey).